We begin with the raw amino-acid sequence, 514 residues long: Zinc finger and BTB domain-containing protein 2 (514 aa).

The BTB domain occupies 24-89; the sequence is CDCTVAIGDV…MYTGKMAPQL (66 aa). Residues lysine 147 and lysine 154 each participate in a glycyl lysine isopeptide (Lys-Gly) (interchain with G-Cter in SUMO2) cross-link. A disordered region spans residues 149 to 231; that stretch reads ASAPEKLGRD…LEASSSDEQP (83 aa). 2 stretches are compositionally biased toward polar residues: residues 161-200 and 222-231; these read PQTSRISQEQVPEASQLSQLTSNLAQVNRTNMTPSDPLQT and LEASSSDEQP. A C2H2-type 1 zinc finger spans residues 254-276; sequence YACHLCGRRFTLRSSLREHLQIH. Position 341 is a phosphoserine (serine 341). Lysine 362 participates in a covalent cross-link: Glycyl lysine isopeptide (Lys-Gly) (interchain with G-Cter in SUMO2). The C2H2-type 2 zinc-finger motif lies at 363 to 385; the sequence is YECTICGRKFIQKSHWREHMYIH. Residues 390–410 form a C2H2-type 3; atypical zinc finger; it reads FKCSTCDKSFCRANQAARHVC. Residues 448 to 468 form a C2H2-type 4; atypical zinc finger; it reads YKCNLCDKTFSTPNEVVKHSC. Glycyl lysine isopeptide (Lys-Gly) (interchain with G-Cter in SUMO2) cross-links involve residues lysine 465, lysine 505, and lysine 506.

The protein localises to the nucleus. May be involved in transcriptional regulation. The polypeptide is Zinc finger and BTB domain-containing protein 2 (ZBTB2) (Homo sapiens (Human)).